We begin with the raw amino-acid sequence, 134 residues long: Replication enhancer protein (134 aa).

It belongs to the geminiviridae replication enhancer protein family. Homooligomer. Interacts with the replication-associated protein (REP). Interacts with host proliferating cell nuclear antigen (PCNA). Interacts with host retinoblastoma-related protein 1 (RBR1), and may thereby deregulate the host cell cycle. Oligomerization and interaction with PCNA are necessary for optimal replication enhancement.

Functionally, increases viral DNA accumulation. Enhances infectivity and symptom expression. The sequence is that of Replication enhancer protein from Solanum lycopersicum (Tomato).